A 270-amino-acid chain; its full sequence is uncharacterized protein (270 aa).

30-55 (ATGSLGRVAARALADAGARLTLAGGN) provides a ligand contact to NADP(+). Ser157 serves as a coordination point for substrate. Residue Tyr171 is the Proton acceptor of the active site.

Belongs to the short-chain dehydrogenases/reductases (SDR) family.

This is an uncharacterized protein from Mycobacterium tuberculosis (strain CDC 1551 / Oshkosh).